The following is a 960-amino-acid chain: MASERHHSIDAQLRALAPGKVSEELIQYDALLVDRFLDILQDLHGPSLREFVQECYEVSADYEGKKDTSKLGELGAKLTGLAPADAILVASSILHMLNLANLAEEVELAHRRRNSKLKHGDFSDEGSATTESDIEETLKRLVSLGKTPAEVFEALKNQSVDLVFTAHPTQSARRSLLQKNARIRNCLTQLSAKDVTVEDKKELDEALHREIQAAFRTDEIRRAQPTPQDEMRYGMSYIHETVWNGVPKFLRRVDTALKNIGINERLPYDVPLIKFCSWMGGDRDGNPRVTPEVTRDVCLLSRMMAANLYINQVEDLMFELSMWRCNDELRARAEEVQSTPASKKVTKYYIEFWKQIPPNEPYRVILGAVRDKLYNTRERARHLLATGFSEISEDAVFTKIEEFLEPLELCYKSLCECGDKAIADGSLLDLLRQVFTFGLSLVKLDIRQESERQTDVIDAITTHLGIGSYRSWPEDKRMEWLVSELKGKRPLLPPDLPMTEEIADVIGAMRVLAELPIDSFGPYIISMCTAPSDVLAVELLQRECGIRQTLPVVPLFERLADLQAAPASVEKLFSTDWYINHINGKQQVMVGYSDSGKDAGRLSAAWQLYVAQEEMAKVAKKYGVKLTLFHGRGGTVGRGGGPTHLAILSQPPDTINGSIRVTVQGEVIEFMFGEENLCFQSLQRFTAATLEHGMHPPVSPKPEWRKLMEEMAVVATEEYRSVVVKEPRFVEYFRSATPETEYGKMNIGSRPAKRRPGGGITTLRAIPWIFSWTQTRFHLPVWLGVGAAFKWAIDKDIKNFQKLKEMYNEWPFFRVTLDLLEMVFAKGDPGIAGLYDELLVAEELKPFGKQLRDKYVETQQLLLQIAGHKDILEGDPYLKQGLRLRNPYITTLNVFQAYTLKRIRDPSFKVTPQPPLSKEFADENKPAGLVKLNGERVPPGLEDTLILTMKGIAAGMQNTG.

At serine 8 the chain carries Phosphoserine. Catalysis depends on residues histidine 167 and lysine 597.

This sequence belongs to the PEPCase type 1 family. In terms of assembly, homotetramer. The cofactor is Mg(2+).

The protein localises to the cytoplasm. It carries out the reaction oxaloacetate + phosphate = phosphoenolpyruvate + hydrogencarbonate. Its pathway is photosynthesis; C4 acid pathway. By light-reversible phosphorylation. Functionally, through the carboxylation of phosphoenolpyruvate (PEP) it forms oxaloacetate, a four-carbon dicarboxylic acid source for the tricarboxylic acid cycle. The polypeptide is Phosphoenolpyruvate carboxylase 3 (Sorghum bicolor (Sorghum)).